Reading from the N-terminus, the 70-residue chain is Palustrin-2ISa (70 aa).

A signal peptide spans 1-22 (MFTLKKSLLLLFFLGTISLSLC). Residues 23–39 (EQERSAEDEGEVIEEEV) constitute a propeptide, removed in mature form. A disulfide bond links Cys64 and Cys70.

Expressed by the skin glands.

It localises to the secreted. Has antimicrobial activity against Gram-negative bacterium E.coli ATCC 8739 (MIC=100 ug), against Gram positive bacteria S.aureus ATCC 6538 (MIC=25 ug), methicillin-resistant S.aureus ATCC 43300 (MIC=100 ug), B.subtilis ATCC 6633 (MIC=12.5 ug) and against fungus C.albicans ATCC 90028 (MIC=100 ug). In Odorrana ishikawae (Ishikawa's frog), this protein is Palustrin-2ISa.